Here is a 153-residue protein sequence, read N- to C-terminus: SsrA-binding protein (153 aa).

The protein belongs to the SmpB family.

It is found in the cytoplasm. Its function is as follows. Required for rescue of stalled ribosomes mediated by trans-translation. Binds to transfer-messenger RNA (tmRNA), required for stable association of tmRNA with ribosomes. tmRNA and SmpB together mimic tRNA shape, replacing the anticodon stem-loop with SmpB. tmRNA is encoded by the ssrA gene; the 2 termini fold to resemble tRNA(Ala) and it encodes a 'tag peptide', a short internal open reading frame. During trans-translation Ala-aminoacylated tmRNA acts like a tRNA, entering the A-site of stalled ribosomes, displacing the stalled mRNA. The ribosome then switches to translate the ORF on the tmRNA; the nascent peptide is terminated with the 'tag peptide' encoded by the tmRNA and targeted for degradation. The ribosome is freed to recommence translation, which seems to be the essential function of trans-translation. The protein is SsrA-binding protein of Cytophaga hutchinsonii (strain ATCC 33406 / DSM 1761 / CIP 103989 / NBRC 15051 / NCIMB 9469 / D465).